We begin with the raw amino-acid sequence, 567 residues long: DNA-binding protein REPIN1 (567 aa).

Residues Pro17 to Ala52 form a disordered region. The segment covering Gly22 to Ala50 has biased composition (polar residues). Phosphoserine is present on Ser27. The residue at position 30 (Thr30) is a Phosphothreonine. N6-acetyllysine is present on Lys33. Residues His57–Cys79 form a C2H2-type 1; atypical zinc finger. 7 consecutive C2H2-type zinc fingers follow at residues Leu85–His107, Phe116–His138, Ile145–His168, Phe177–His199, Phe236–His258, His264–His286, and Tyr292–His314. Lys276 bears the N6-acetyllysine mark. The segment covering Pro305–Lys315 has biased composition (basic residues). The interval Pro305–Pro372 is disordered. Residues Pro345–Glu362 show a composition bias toward pro residues. 7 consecutive C2H2-type zinc fingers follow at residues Tyr375–His397, Phe403–His425, Phe431–His453, Phe459–His481, Tyr487–His509, Tyr515–His537, and Phe543–His565.

As to quaternary structure, homodimers and homomultimers. Found in a complex with RIP60 and RIP100. In terms of tissue distribution, expressed in adipose tissue and bone tissue.

The protein resides in the nucleus. The protein localises to the cytoplasm. It is found in the cytosol. Its function is as follows. Sequence-specific double-stranded DNA-binding protein. Binds ATT-rich and T-rich DNA sequences and facilitates DNA bending. May regulate the expression of genes involved in cellular fatty acid import, including SCARB1/CD36, and genes involved in lipid droplet formation. May regulate the expression of LCN2, and thereby influence iron metabolism and apoptosis-related pathways. May regulate the expression of genes involved in glucose transport. The chain is DNA-binding protein REPIN1 (REPIN1) from Homo sapiens (Human).